Reading from the N-terminus, the 372-residue chain is MPLNDFHVSEPYTLGIELEMQVINPPGYDLSQDSSTLIDAVKPQLTAGEIKHDITESMLEMATGVCRDIDQVAAQLSAMQHVILQAASEHHLGICGGGTHPFQKWQRQEVCDNERYQRTLENFGYLIQQATVFGQHVHVGCANGDDAIYLLHGLSHFVPHFIALSAASPYMQGSDTRFACARLNIFSAFPDNGPMPWVSNWQEFAGLFRRLSYTAMIDSIKDLHWDIRPSPDFGTVEVRVMDTPLTLDQAINMAGLIQATAHWLLTERPFKPQEQDYLLYKFNRFQACRYGLEGMLTDVYTGDRRRLADDTLRLLDNVTPSARKVGADSAIDALRLQVKKGGNEAQYMREFIADGGSLIGLVQKHCEIWAGQ.

This sequence belongs to the glutamate--cysteine ligase type 2 family. YbdK subfamily. As to quaternary structure, homodimer.

It catalyses the reaction L-cysteine + L-glutamate + ATP = gamma-L-glutamyl-L-cysteine + ADP + phosphate + H(+). In terms of biological role, ATP-dependent carboxylate-amine ligase which exhibits weak glutamate--cysteine ligase activity. The sequence is that of Putative glutamate--cysteine ligase 2 (ybdK) from Salmonella arizonae (strain ATCC BAA-731 / CDC346-86 / RSK2980).